Consider the following 76-residue polypeptide: Short coiled-coil protein B (76 aa).

Residues 6-52 (ENQVELEEKTRLINQVLELQNTLEDLSARVDAVKEENLKLKSENQVL) are a coiled coil.

Belongs to the SCOC family.

The protein resides in the golgi apparatus membrane. It localises to the golgi apparatus. It is found in the trans-Golgi network. Its subcellular location is the cytoplasm. The protein localises to the cytosol. In terms of biological role, positive regulator of amino acid starvation-induced autophagy. The protein is Short coiled-coil protein B (scocb) of Danio rerio (Zebrafish).